The chain runs to 373 residues: MRKDLLSQVKRIVIKVGSGVIFGQDGLDLDVIGSLSRDICALLSQGYEVVLVSSGAVATGKGELGIVGRPPTIPLKQAAAAIGQSRLMRAWKDAFRPCGRCVGQILLTRDDLANRRRFLNARNTLMTLLEYGVVPVINENDTVVVEEIRFGDNDNLSALTTSLAEADLLIILSDVNGLYDSNPKTNPAARKFSVIERITEDIEQMAGGAGSVVGTGGMATKVEAAKRATLYGVGTIIVDGRQAGVLPKLMAGEELGTFFLPVPQHMTARKHWISFSKASRGKLLVDEGARRAVAEKGKSLLPSGIFSIEGKFDRGDAVRICDAEGRVFAKGIASYSRQELERIMGRNSSEIEVVLGYKYGDEVVHRDNLVVKK.

Lys-15 provides a ligand contact to ATP. Ser-54, Asp-141, and Asn-153 together coordinate substrate. ATP is bound by residues 173–174 (SD) and 215–221 (TGGMATK). Positions 280-358 (RGKLLVDEGA…SEIEVVLGYK (79 aa)) constitute a PUA domain.

It belongs to the glutamate 5-kinase family.

The protein localises to the cytoplasm. The enzyme catalyses L-glutamate + ATP = L-glutamyl 5-phosphate + ADP. It participates in amino-acid biosynthesis; L-proline biosynthesis; L-glutamate 5-semialdehyde from L-glutamate: step 1/2. Catalyzes the transfer of a phosphate group to glutamate to form L-glutamate 5-phosphate. The protein is Glutamate 5-kinase of Syntrophotalea carbinolica (strain DSM 2380 / NBRC 103641 / GraBd1) (Pelobacter carbinolicus).